We begin with the raw amino-acid sequence, 136 residues long: UPF0225 protein Pnap_0466 (136 aa).

The protein belongs to the UPF0225 family.

This Polaromonas naphthalenivorans (strain CJ2) protein is UPF0225 protein Pnap_0466.